Reading from the N-terminus, the 150-residue chain is Large ribosomal subunit protein uL15 (150 aa).

The segment at 1–49 is disordered; that stretch reads MELHQLKSVSKSRNHKSKVVGRGHGSGLGKTSSRGQKGQKARKSGLTRL. Basic residues predominate over residues 10-21; sequence SKSRNHKSKVVG.

This sequence belongs to the universal ribosomal protein uL15 family. As to quaternary structure, part of the 50S ribosomal subunit.

In terms of biological role, binds to the 23S rRNA. In Mycoplasma genitalium (strain ATCC 33530 / DSM 19775 / NCTC 10195 / G37) (Mycoplasmoides genitalium), this protein is Large ribosomal subunit protein uL15.